A 266-amino-acid chain; its full sequence is Killer cell lectin-like receptor 5 (266 aa).

Over 1–44 the chain is Cytoplasmic; sequence MSEPEVTYSTVRLHKSSGLQRLVSHEEIQGPGEAGYRKCSVPWQ. The chain crosses the membrane as a helical; Signal-anchor for type II membrane protein span at residues 45–66; sequence LTVRSLGIFCFLLLVTVAVLAV. Topologically, residues 67–266 are extracellular; it reads KIFQYSQHKQ…CGKKLDHFPG (200 aa). N87 and N104 each carry an N-linked (GlcNAc...) asparagine glycan. Residues 143–261 enclose the C-type lectin domain; that stretch reads GVKHWFCYGT…SYFCICGKKL (119 aa). 4 cysteine pairs are disulfide-bonded: C149–C154, C167–C255, C171–C257, and C236–C249. The N-linked (GlcNAc...) asparagine glycan is linked to N250.

In terms of assembly, homodimer; disulfide-linked. As to expression, mostly expressed in NK cells, but also observed on NK T and memory T-cells.

Its subcellular location is the membrane. Its function is as follows. Receptor on natural killer (NK) cells for class I MHC. This is Killer cell lectin-like receptor 5 (Klra5) from Mus musculus (Mouse).